Reading from the N-terminus, the 324-residue chain is Dioxygenase tasH (324 aa).

An N-terminal signal peptide occupies residues 1–25 (MRSMSLWMLIGPVTGIATWASLRYA). 3 residues coordinate Zn(2+): histidine 50, histidine 96, and histidine 284.

This sequence belongs to the DODA-type extradiol aromatic ring-opening dioxygenase family. As to quaternary structure, monomer. It depends on Zn(2+) as a cofactor.

In terms of biological role, dioxygenase; part of the gene cluster that mediates the biosynthesis of the tetramic acids Sch210971 and Sch210972, potential anti-HIV fungal natural product that contain a decalin core. The PKS module of tasS together with the enoylreductase tasC catalyze the formation of the polyketide unit which is then conjugated to 4-hydroxyl-4-methyl glutamate (HMG) by the condensation domain of the tasS NRPS module. One unique structural feature of Sch210971 and Sch210972 is the tetramic acid motif proposed to be derived from the non-proteinogenic amino acid HMG, by a Dieckmann-type condensation catalyzed by the reductase domain of tasS. The aldolase tasA catalyzes the aldol condensation of 2 molecules of pyruvic acid to yield the intermediate 4-hydroxyl-4-methyl-2-oxoglutarate (HMOG), which can then be stereoselectively transaminated, may be by tasG, to form HMG. The Diels-Alderase tas3 then uses the Dieckmann product of tasS as substrate and catalyzes the Diels-Alder cycloaddition to form the decalin ring of Sch210971 and Sch210972. This is Dioxygenase tasH from Hapsidospora irregularis.